The primary structure comprises 304 residues: MVCVLIPATSANLGPGFDAVGMALSFYNEVSLGPSPKELEIEVFGDGAELISRDKNNLVYVAITKIFERLGKTPRNLKLTLKNRVPLARGLGSSAAAIVGGLVAANAYLGNPLPKDELLRLATELEGHPDNVAPALLGGVVVSGFDRDKVKYLKLPVPEVEVVVAIPKFQLKTADSRQILPAEIPFSQAVLNVNRVSFLIAAFCLKKYEYLQIGMEDYLHQPYRSQLIPGFYQVVEEAKKAGAYGVALSGSGPTVIALAREGKAVGRAIEETFLNFGVEAEIIYTRPEERGAIDLINYKGEGDC.

ATP is bound at residue 86-96 (PLARGLGSSAA).

It belongs to the GHMP kinase family. Homoserine kinase subfamily.

It is found in the cytoplasm. The enzyme catalyses L-homoserine + ATP = O-phospho-L-homoserine + ADP + H(+). Its pathway is amino-acid biosynthesis; L-threonine biosynthesis; L-threonine from L-aspartate: step 4/5. Catalyzes the ATP-dependent phosphorylation of L-homoserine to L-homoserine phosphate. The chain is Homoserine kinase from Carboxydothermus hydrogenoformans (strain ATCC BAA-161 / DSM 6008 / Z-2901).